The primary structure comprises 320 residues: Adhesin MafA 1 (320 aa).

The first 18 residues, 1 to 18, serve as a signal peptide directing secretion; the sequence is MQARLLIPILFSVFILSA. Cysteine 19 carries the N-palmitoyl cysteine lipid modification. Cysteine 19 carries the S-diacylglycerol cysteine lipid modification. A disordered region spans residues 288 to 320; that stretch reads HMGNSAPSVEADNSHEGYGYSDEAVRRHRQGQP.

The protein belongs to the MafA family.

The protein resides in the cell outer membrane. This is Adhesin MafA 1 (mafA1) from Neisseria meningitidis serogroup A / serotype 4A (strain DSM 15465 / Z2491).